Reading from the N-terminus, the 254-residue chain is uncharacterized protein (254 aa).

It belongs to the methyltransferase superfamily.

This is an uncharacterized protein from Mycobacterium tuberculosis (strain ATCC 25177 / H37Ra).